A 390-amino-acid polypeptide reads, in one-letter code: MVTVEEVRKAQRAEGPATVMAIGTAVPPNCVDQATYPDYYFRITNSEHKAELKEKFQRMCDKSQIKKRYMYLNEEVLKENPNMCAYMAPSLDARQDIVVVEVPKLGKEAAVKAIKEWGQPKSKITHLVFCTTSGVDMPGADYQLTKLLGLRPSVKRLMMYQQGCFAGGTVLRLAKDLAENNKGARVLVVCSEITAVTFRGPTDTHLDSLVGQALFGDGAAAIIIGSDPIPEVEKPLFELVSAAQTILPDSEGAIDGHLREVGLTFHLLKDVPGLISKNVEKSLTEAFKPLGISDWNSLFWIAHPGGPAILDQVEAKLSLKPEKLRATRHVLSEYGNMSSACVLFILDEMRRKSKEDGLKTTGEGIEWGVLFGFGPGLTVETVVLHSVAIN.

C164 is a catalytic residue.

The protein belongs to the thiolase-like superfamily. Chalcone/stilbene synthases family.

It catalyses the reaction (E)-4-coumaroyl-CoA + 3 malonyl-CoA + 3 H(+) = 2',4,4',6'-tetrahydroxychalcone + 3 CO2 + 4 CoA. It participates in secondary metabolite biosynthesis; flavonoid biosynthesis. The primary product of this enzyme is 4,2',4',6'-tetrahydroxychalcone (also termed naringenin-chalcone or chalcone) which undergoes enzyme-catalyzed or spontaneous isomerization into naringenin. This Hypericum androsaemum (Tutsan) protein is Chalcone synthase.